Reading from the N-terminus, the 488-residue chain is MDSPVSKTDASKEKFVASRPSTADSKTMRGCGLANLAWVGVDKVELRQRLMMPEYLRLAMRDCIKRKDSSAIPDHLLLPGGAVADMAPHAPMVVFINPNSGGRHGPVLKERLQQLMSEEQVFDLTEVKPHEFVRYGLGCLEKVAAEGDECAKECRARLRIMVAGGDGTVGWVLGCLGELNKDGKSQIPPVGVIPLGTGNDLSRSFGWGGSFPFAWRSAVKRTLHRASMGPVARLDSWKILVSMPSGEVVDPPYSLKPAEENELDQGLDAGIDAPPLAKAYEGVFYNYLSIGMDAQVAYGFHHLRNTKPYLAQGPISNKIIYSSFGCSQGWFCTPCVNDPGLRGLRNIMKIHIKKVNCSQWEEIAVPKNVRSIVALNLHSYGSGSHPWGNLKPDYLEKRGFVEAHCDDGLIEIFGFKQGWHASFVMAELISAKHIAQAAAVRFELRGGDWRDAFLQMDGEPWKQPMSTEYSTFVEIKKVPYQSLMINNE.

A disordered region spans residues 1 to 24 (MDSPVSKTDASKEKFVASRPSTAD). Positions 87-245 (APHAPMVVFI…SWKILVSMPS (159 aa)) constitute a DAGKc domain.

Belongs to the eukaryotic diacylglycerol kinase family. In terms of assembly, monomer.

It carries out the reaction a 1,2-diacyl-sn-glycerol + ATP = a 1,2-diacyl-sn-glycero-3-phosphate + ADP + H(+). Phosphorylates the second messenger diacylglycerol (DAG) to generate phosphatidic acid (PA), another important signaling molecule. PA is required for plant development and responses to abiotic stress and pathogen attack. May be involved in the accumulation of PA during cold stress. The protein is Diacylglycerol kinase 3 (DGK3) of Arabidopsis thaliana (Mouse-ear cress).